A 318-amino-acid chain; its full sequence is Beta-ketoacyl-[acyl-carrier-protein] synthase III (318 aa).

Catalysis depends on residues Cys113 and His245. The segment at 246–250 (QANIR) is ACP-binding. Asn275 is an active-site residue.

Belongs to the thiolase-like superfamily. FabH family. As to quaternary structure, homodimer.

Its subcellular location is the cytoplasm. It carries out the reaction malonyl-[ACP] + acetyl-CoA + H(+) = 3-oxobutanoyl-[ACP] + CO2 + CoA. The protein operates within lipid metabolism; fatty acid biosynthesis. Its function is as follows. Catalyzes the condensation reaction of fatty acid synthesis by the addition to an acyl acceptor of two carbons from malonyl-ACP. Catalyzes the first condensation reaction which initiates fatty acid synthesis and may therefore play a role in governing the total rate of fatty acid production. Possesses both acetoacetyl-ACP synthase and acetyl transacylase activities. Its substrate specificity determines the biosynthesis of branched-chain and/or straight-chain of fatty acids. In Wolbachia pipientis subsp. Culex pipiens (strain wPip), this protein is Beta-ketoacyl-[acyl-carrier-protein] synthase III.